Here is a 220-residue protein sequence, read N- to C-terminus: Catechol O-methyltransferase (220 aa).

Residues valine 44, glutamate 66, 68 to 69, serine 74, glutamate 92, and alanine 121 each bind S-adenosyl-L-methionine; that span reads GT. A divalent metal cation is bound at residue aspartate 139. S-adenosyl-L-methionine is bound at residue aspartate 141. A divalent metal cation-binding residues include aspartate 165 and asparagine 166.

Belongs to the class I-like SAM-binding methyltransferase superfamily. Cation-dependent O-methyltransferase family. In terms of assembly, homodimer. Requires a divalent metal cation as cofactor.

The enzyme catalyses a catechol + S-adenosyl-L-methionine = a guaiacol + S-adenosyl-L-homocysteine + H(+). Inhibited by EDTA. In terms of biological role, catechol O-methyltransferase that can use various catechol-like compounds such as gallic acid (GA), 3,4-dihydroxy-5-methoxy-benzoic acid (5OMeBA), protocatechuic acid (PCA), 3,4-dihydroxy-benzaldehyde (DHA), dopamine, caffeic acid (CA), luteolin, quercetin, and 5-hydroxyuridine. The polypeptide is Catechol O-methyltransferase (Mycobacterium tuberculosis (strain ATCC 25618 / H37Rv)).